Consider the following 575-residue polypeptide: MSLAFNVGVTPFSGQRVGSRKEKFPVQGFPVTTPNRSRLIVNCSLTTIDFMAKMKENFKREDDKFPTTTTLRSEDIPSNLCIIDTLQRLGVDQFFQYEINTILDNTFRLWQEKHKVIYGNVTTHAMAFRLLRVKGYEVSSEELAPYGNQEAVSQQTNDLPMIIELYRAANERIYEEERSLEKILAWTTIFLNKQVQDNSIPDKKLHKLVEFYLRNYKGITIRLGARRNLELYDMTYYQALKSTNRFSNLCNEDFLVFAKQDFDIHEAQNQKGLQQLQRWYADCRLDTLNFGRDVVIIANYLASLIIGDHAFDYVRLAFAKTSVLVTIMDDFFDCHGSSQECDKIIELVKEWKENPDAEYGSEELEILFMALYNTVNELAERARVEQGRSVKEFLVKLWVEILSAFKIELDTWSNGTQQSFDEYISSSWLSNGSRLTGLLTMQFVGVKLSDEMLMSEECTDLARHVCMVGRLLNDVCSSEREREENIAGKSYSILLATEKDGRKVSEDEAIAEINEMVEYHWRKVLQIVYKKESILPRRCKDVFLEMAKGTFYAYGINDELTSPQQSKEDMKSFVF.

The N-terminal 51 residues, 1-51 (MSLAFNVGVTPFSGQRVGSRKEKFPVQGFPVTTPNRSRLIVNCSLTTIDFM), are a transit peptide targeting the chloroplast. Mg(2+)-binding residues include aspartate 329, aspartate 333, asparagine 473, serine 477, and glutamate 481. Residues 329-333 (DDFFD) carry the DDXXD motif motif.

This sequence belongs to the terpene synthase family.

The protein resides in the plastid. The protein localises to the chloroplast. It catalyses the reaction 8-hydroxycopalyl diphosphate + H2O = sclareol + diphosphate. The protein operates within secondary metabolite biosynthesis; terpenoid biosynthesis. In terms of biological role, involved in the biosynthesis of labdane-type diterpenoid including sclareol, a diterpene-diol that is used as fragrance and flavoring, and has anticancer effects (able to kill leukemic and colon cancer cells by apoptosis). Sclareol can also be used as synthesis precursor of ambergris substitution fragance products such as ambrox. Terpene synthase that catalyzes the conversion of 8-hydroxy-copalyl diphosphate to sclareol. The chain is Sclareol synthase, chloroplastic from Salvia sclarea (Clary sage).